We begin with the raw amino-acid sequence, 297 residues long: N-acetylmuramic acid 6-phosphate etherase (297 aa).

An SIS domain is found at 55 to 218 (AAKRYSKGGR…STGVMIKQGK (164 aa)). Catalysis depends on Glu-83, which acts as the Proton donor. The active site involves Glu-114.

It belongs to the GCKR-like family. MurNAc-6-P etherase subfamily. As to quaternary structure, homodimer.

It catalyses the reaction N-acetyl-D-muramate 6-phosphate + H2O = N-acetyl-D-glucosamine 6-phosphate + (R)-lactate. It functions in the pathway amino-sugar metabolism; N-acetylmuramate degradation. In terms of biological role, specifically catalyzes the cleavage of the D-lactyl ether substituent of MurNAc 6-phosphate, producing GlcNAc 6-phosphate and D-lactate. The protein is N-acetylmuramic acid 6-phosphate etherase of Lactobacillus gasseri (strain ATCC 33323 / DSM 20243 / BCRC 14619 / CIP 102991 / JCM 1131 / KCTC 3163 / NCIMB 11718 / NCTC 13722 / AM63).